Consider the following 393-residue polypeptide: Riboflavin biosynthesis protein RibBA (393 aa).

The interval M1–K200 is DHBP synthase. Residues R27–E28, D32, R139–T143, and E163 contribute to the D-ribulose 5-phosphate site. E28 contacts Mg(2+). Residue H142 participates in Mg(2+) binding. Residues L201–I393 are GTP cyclohydrolase II. R249–A253 is a binding site for GTP. Zn(2+) is bound by residues C254, C265, and C267. GTP is bound by residues Q270, E291–R293, and T313. The active-site Proton acceptor; for GTP cyclohydrolase activity is D325. R327 serves as the catalytic Nucleophile; for GTP cyclohydrolase activity. Positions 348 and 353 each coordinate GTP.

This sequence in the N-terminal section; belongs to the DHBP synthase family. In the C-terminal section; belongs to the GTP cyclohydrolase II family. Mg(2+) serves as cofactor. It depends on Mn(2+) as a cofactor. Zn(2+) is required as a cofactor.

It carries out the reaction D-ribulose 5-phosphate = (2S)-2-hydroxy-3-oxobutyl phosphate + formate + H(+). The catalysed reaction is GTP + 4 H2O = 2,5-diamino-6-hydroxy-4-(5-phosphoribosylamino)-pyrimidine + formate + 2 phosphate + 3 H(+). Its pathway is cofactor biosynthesis; riboflavin biosynthesis; 2-hydroxy-3-oxobutyl phosphate from D-ribulose 5-phosphate: step 1/1. The protein operates within cofactor biosynthesis; riboflavin biosynthesis; 5-amino-6-(D-ribitylamino)uracil from GTP: step 1/4. Functionally, catalyzes the conversion of D-ribulose 5-phosphate to formate and 3,4-dihydroxy-2-butanone 4-phosphate. Catalyzes the conversion of GTP to 2,5-diamino-6-ribosylamino-4(3H)-pyrimidinone 5'-phosphate (DARP), formate and pyrophosphate. The chain is Riboflavin biosynthesis protein RibBA from Staphylococcus aureus (strain MRSA252).